The primary structure comprises 237 residues: MVTHGKKYQDAIKLLDQSAAYAPAEAIDLAKKMSAAKFDETVEMHLKMGLDPKNATQQLRGVAVLPHGLGKTVRVLVFAQGEAEKAAQVAGADVYGGDELIKKIEAGFLDFDVAISTPDMMSKVGKLGKVLGRRGLMPNPKSGTVVPAEDFKKVIEEARKGRVEFKLDRSGIVHIILGKASFEGQMLLENMTSVVDAIIRSKPTGAKGQYIKSAYLATTMGPGVRLDLRAVSAMGGV.

This sequence belongs to the universal ribosomal protein uL1 family. In terms of assembly, part of the 50S ribosomal subunit.

Functionally, binds directly to 23S rRNA. The L1 stalk is quite mobile in the ribosome, and is involved in E site tRNA release. Protein L1 is also a translational repressor protein, it controls the translation of the L11 operon by binding to its mRNA. The sequence is that of Large ribosomal subunit protein uL1 from Dehalococcoides mccartyi (strain ATCC BAA-2100 / JCM 16839 / KCTC 5957 / BAV1).